The sequence spans 708 residues: Ion-translocating oxidoreductase complex subunit C (708 aa).

2 consecutive 4Fe-4S ferredoxin-type domains span residues 369-397 (GEPQ…QQLY) and 407-436 (KATT…VQYF). Residues cysteine 377, cysteine 380, cysteine 383, cysteine 387, cysteine 416, cysteine 419, cysteine 422, and cysteine 426 each contribute to the [4Fe-4S] cluster site. The tract at residues 630–682 (AKARKLEQQQANAEPEEQIDPRKAAVEAAIARAKARKLEQQQANAEPEEQIDP) is disordered.

This sequence belongs to the 4Fe4S bacterial-type ferredoxin family. RnfC subfamily. The complex is composed of six subunits: RsxA, RsxB, RsxC, RsxD, RsxE and RsxG. [4Fe-4S] cluster is required as a cofactor.

It is found in the cell inner membrane. In terms of biological role, part of a membrane-bound complex that couples electron transfer with translocation of ions across the membrane. Required to maintain the reduced state of SoxR. The sequence is that of Ion-translocating oxidoreductase complex subunit C from Escherichia coli O1:K1 / APEC.